An 82-amino-acid chain; its full sequence is UPF0235 protein Pden_2174 (82 aa).

Belongs to the UPF0235 family.

The sequence is that of UPF0235 protein Pden_2174 from Paracoccus denitrificans (strain Pd 1222).